We begin with the raw amino-acid sequence, 608 residues long: Elongation factor 4 (608 aa).

Residues 11 to 193 (KKIRNFSIIA…QIVEKVPEPS (183 aa)) form the tr-type G domain. GTP is bound by residues 23 to 28 (DHGKST) and 140 to 143 (NKID).

It belongs to the TRAFAC class translation factor GTPase superfamily. Classic translation factor GTPase family. LepA subfamily.

The protein resides in the cell membrane. The catalysed reaction is GTP + H2O = GDP + phosphate + H(+). In terms of biological role, required for accurate and efficient protein synthesis under certain stress conditions. May act as a fidelity factor of the translation reaction, by catalyzing a one-codon backward translocation of tRNAs on improperly translocated ribosomes. Back-translocation proceeds from a post-translocation (POST) complex to a pre-translocation (PRE) complex, thus giving elongation factor G a second chance to translocate the tRNAs correctly. Binds to ribosomes in a GTP-dependent manner. The polypeptide is Elongation factor 4 (Listeria monocytogenes serotype 4b (strain CLIP80459)).